A 502-amino-acid chain; its full sequence is Glycerol kinase (502 aa).

ADP is bound at residue T14. ATP contacts are provided by T14, T15, and S16. Position 14 (T14) interacts with sn-glycerol 3-phosphate. R18 contributes to the ADP binding site. 3 residues coordinate sn-glycerol 3-phosphate: R84, E85, and Y136. Residues R84, E85, and Y136 each contribute to the glycerol site. Phosphohistidine; by HPr is present on H232. Position 246 (D246) interacts with sn-glycerol 3-phosphate. Glycerol is bound by residues D246 and Q247. 2 residues coordinate ADP: T268 and G311. ATP is bound by residues T268, G311, Q315, and G412. Positions 412 and 416 each coordinate ADP.

Belongs to the FGGY kinase family. Homotetramer and homodimer (in equilibrium). In terms of processing, the phosphoenolpyruvate-dependent sugar phosphotransferase system (PTS), including enzyme I, and histidine-containing protein (HPr) are required for the phosphorylation, which leads to the activation of the enzyme.

The catalysed reaction is glycerol + ATP = sn-glycerol 3-phosphate + ADP + H(+). Its pathway is polyol metabolism; glycerol degradation via glycerol kinase pathway; sn-glycerol 3-phosphate from glycerol: step 1/1. Activated by phosphorylation and inhibited by fructose 1,6-bisphosphate (FBP). Functionally, key enzyme in the regulation of glycerol uptake and metabolism. Catalyzes the phosphorylation of glycerol to yield sn-glycerol 3-phosphate. The protein is Glycerol kinase of Streptococcus pneumoniae serotype 19F (strain G54).